The primary structure comprises 460 residues: Serine--tRNA ligase (460 aa).

242–244 (TAE) contributes to the L-serine binding site. Residues 273 to 275 (RRE) and Val289 each bind ATP. Residue Glu296 coordinates L-serine. 369-372 (EVSS) lines the ATP pocket. Position 405 (Ser405) interacts with L-serine.

Belongs to the class-II aminoacyl-tRNA synthetase family. Type-1 seryl-tRNA synthetase subfamily. Homodimer. The tRNA molecule binds across the dimer.

Its subcellular location is the cytoplasm. It catalyses the reaction tRNA(Ser) + L-serine + ATP = L-seryl-tRNA(Ser) + AMP + diphosphate + H(+). The catalysed reaction is tRNA(Sec) + L-serine + ATP = L-seryl-tRNA(Sec) + AMP + diphosphate + H(+). The protein operates within aminoacyl-tRNA biosynthesis; selenocysteinyl-tRNA(Sec) biosynthesis; L-seryl-tRNA(Sec) from L-serine and tRNA(Sec): step 1/1. In terms of biological role, catalyzes the attachment of serine to tRNA(Ser). Is also able to aminoacylate tRNA(Sec) with serine, to form the misacylated tRNA L-seryl-tRNA(Sec), which will be further converted into selenocysteinyl-tRNA(Sec). This chain is Serine--tRNA ligase, found in Haloquadratum walsbyi (strain DSM 16790 / HBSQ001).